A 1417-amino-acid chain; its full sequence is DExH-box ATP-dependent RNA helicase DExH4, chloroplastic (1417 aa).

The span at 1–12 (MAPTKKPQKNKQ) shows a compositional bias: basic residues. The interval 1–37 (MAPTKKPQKNKQSKNEIASSLIPNSGHKKPSKAPKLL) is disordered. The transit peptide at 1–61 (MAPTKKPQKN…NFRRTPSPVT (61 aa)) directs the protein to the chloroplast. One can recognise a Helicase ATP-binding domain in the interval 607–781 (LQKLKEKDVL…FGQCPIITAQ (175 aa)). 620–627 (GETGSGKT) is an ATP binding site. The DEIH box signature appears at 722-725 (DEVH). The Helicase C-terminal domain occupies 868-1043 (LLEELICHID…ELCLHIKLLG (176 aa)).

The protein belongs to the DExH box helicase family.

Its subcellular location is the plastid. It is found in the chloroplast. The enzyme catalyses ATP + H2O = ADP + phosphate + H(+). The sequence is that of DExH-box ATP-dependent RNA helicase DExH4, chloroplastic from Arabidopsis thaliana (Mouse-ear cress).